The sequence spans 404 residues: Probable tRNA sulfurtransferase (404 aa).

A THUMP domain is found at 60 to 165 (QPIVEALKLV…DEAAYISYEE (106 aa)). Residues 183–184 (ML), 208–209 (HF), Arg-265, Gly-287, and Gln-296 each bind ATP.

The protein belongs to the ThiI family.

The protein localises to the cytoplasm. The enzyme catalyses [ThiI sulfur-carrier protein]-S-sulfanyl-L-cysteine + a uridine in tRNA + 2 reduced [2Fe-2S]-[ferredoxin] + ATP + H(+) = [ThiI sulfur-carrier protein]-L-cysteine + a 4-thiouridine in tRNA + 2 oxidized [2Fe-2S]-[ferredoxin] + AMP + diphosphate. It catalyses the reaction [ThiS sulfur-carrier protein]-C-terminal Gly-Gly-AMP + S-sulfanyl-L-cysteinyl-[cysteine desulfurase] + AH2 = [ThiS sulfur-carrier protein]-C-terminal-Gly-aminoethanethioate + L-cysteinyl-[cysteine desulfurase] + A + AMP + 2 H(+). It participates in cofactor biosynthesis; thiamine diphosphate biosynthesis. In terms of biological role, catalyzes the ATP-dependent transfer of a sulfur to tRNA to produce 4-thiouridine in position 8 of tRNAs, which functions as a near-UV photosensor. Also catalyzes the transfer of sulfur to the sulfur carrier protein ThiS, forming ThiS-thiocarboxylate. This is a step in the synthesis of thiazole, in the thiamine biosynthesis pathway. The sulfur is donated as persulfide by IscS. The sequence is that of Probable tRNA sulfurtransferase from Streptococcus pyogenes serotype M3 (strain ATCC BAA-595 / MGAS315).